A 119-amino-acid chain; its full sequence is Large ribosomal subunit protein bL20 (119 aa).

It belongs to the bacterial ribosomal protein bL20 family.

Binds directly to 23S ribosomal RNA and is necessary for the in vitro assembly process of the 50S ribosomal subunit. It is not involved in the protein synthesizing functions of that subunit. The sequence is that of Large ribosomal subunit protein bL20 from Rhodopseudomonas palustris (strain BisA53).